The chain runs to 108 residues: Tetrahydromethanopterin S-methyltransferase subunit B (108 aa).

Residues 81–101 (FFGFWISLSILTLGLILVIGL) traverse the membrane as a helical segment.

Belongs to the MtrB family. The complex is composed of 8 subunits; MtrA, MtrB, MtrC, MtrD, MtrE, MtrF, MtrG and MtrH.

It localises to the cell membrane. The enzyme catalyses 5-methyl-5,6,7,8-tetrahydromethanopterin + coenzyme M + 2 Na(+)(in) = 5,6,7,8-tetrahydromethanopterin + methyl-coenzyme M + 2 Na(+)(out). Its pathway is one-carbon metabolism; methanogenesis from CO(2); methyl-coenzyme M from 5,10-methylene-5,6,7,8-tetrahydromethanopterin: step 2/2. Part of a complex that catalyzes the formation of methyl-coenzyme M and tetrahydromethanopterin from coenzyme M and methyl-tetrahydromethanopterin. This is an energy-conserving, sodium-ion translocating step. The polypeptide is Tetrahydromethanopterin S-methyltransferase subunit B (Methanococcus aeolicus (strain ATCC BAA-1280 / DSM 17508 / OCM 812 / Nankai-3)).